Here is a 220-residue protein sequence, read N- to C-terminus: Nucleoside diphosphate kinase, mitochondrial (220 aa).

A mitochondrion-targeting transit peptide spans 1–57 (MFSRFARAFPKILASGASQRTFATVQKAFANPTSKKLIVGSSLLIGSAFATTSFVAC). Residues K80, F128, R156, T162, R173, and N183 each coordinate ATP. H186 functions as the Pros-phosphohistidine intermediate in the catalytic mechanism.

Belongs to the NDK family. Mg(2+) is required as a cofactor.

The protein resides in the mitochondrion intermembrane space. It catalyses the reaction a 2'-deoxyribonucleoside 5'-diphosphate + ATP = a 2'-deoxyribonucleoside 5'-triphosphate + ADP. The catalysed reaction is a ribonucleoside 5'-diphosphate + ATP = a ribonucleoside 5'-triphosphate + ADP. Major role in the synthesis of nucleoside triphosphates other than ATP. The ATP gamma phosphate is transferred to the NDP beta phosphate via a ping-pong mechanism, using a phosphorylated active-site intermediate. The protein is Nucleoside diphosphate kinase, mitochondrial (ndkM) of Dictyostelium discoideum (Social amoeba).